The sequence spans 476 residues: Lactate utilization protein B (476 aa).

4Fe-4S ferredoxin-type domains lie at 304–334 (GTEF…GHSY) and 353–382 (YDDY…LHEL). Residues Cys-313, Cys-316, Cys-319, Cys-323, Cys-366, Cys-369, and Cys-373 each coordinate [4Fe-4S] cluster. A disordered region spans residues 440–476 (KGPGPLKAWTESREFPAPSKERFRDWFQTRQKGGNPS). Basic and acidic residues predominate over residues 449–466 (TESREFPAPSKERFRDWF). Polar residues predominate over residues 467–476 (QTRQKGGNPS).

Belongs to the LutB/YkgF family.

Functionally, is involved in L-lactate degradation and allows cells to grow with lactate as the sole carbon source. Has probably a role as an electron transporter during oxidation of L-lactate. This Geobacillus kaustophilus (strain HTA426) protein is Lactate utilization protein B.